The sequence spans 396 residues: Chorismate synthase (396 aa).

Residues Arg40 and Arg46 each coordinate NADP(+). FMN is bound by residues 134-136 (RSS), 257-258 (QA), Gly302, 317-321 (KPIPS), and Arg343.

It belongs to the chorismate synthase family. Homotetramer. FMNH2 is required as a cofactor.

The enzyme catalyses 5-O-(1-carboxyvinyl)-3-phosphoshikimate = chorismate + phosphate. The protein operates within metabolic intermediate biosynthesis; chorismate biosynthesis; chorismate from D-erythrose 4-phosphate and phosphoenolpyruvate: step 7/7. Catalyzes the anti-1,4-elimination of the C-3 phosphate and the C-6 proR hydrogen from 5-enolpyruvylshikimate-3-phosphate (EPSP) to yield chorismate, which is the branch point compound that serves as the starting substrate for the three terminal pathways of aromatic amino acid biosynthesis. This reaction introduces a second double bond into the aromatic ring system. The protein is Chorismate synthase of Bifidobacterium animalis subsp. lactis (strain AD011).